Reading from the N-terminus, the 1493-residue chain is Pleckstrin homology domain-containing family H member 2 (1493 aa).

Positions 20-175 (LESQLMKFRV…LQEVQGKKSS (156 aa)) form a coiled coil. 4 disordered regions span residues 202 to 230 (SPPQ…DMEE), 245 to 335 (NNRG…SSSI), 363 to 439 (LNSP…LPPP), and 613 to 705 (SSSP…EPLE). The segment covering 208–230 (KSEEMSKISSKEPEFTEGKDMEE) has biased composition (basic and acidic residues). 2 stretches are compositionally biased toward polar residues: residues 245–260 (NNRG…CGSE) and 267–281 (TSFA…NSGA). Positions 374-388 (LSKKEQDSSSDELNK) are enriched in basic and acidic residues. Polar residues-rich tracts occupy residues 389 to 409 (KFQS…TPSP), 421 to 432 (NSLSGKGTQLVP), and 676 to 698 (STDT…SSDN). PH domains are found at residues 703-797 (PLEK…NVLR) and 811-919 (KPTM…VAAG). Positions 955–1110 (HSKEGIISPL…PSRMEILSTL (156 aa)) constitute a MyTH4 domain. An FERM domain is found at 1121–1451 (FSIPVHFMNG…SYINNFHQQK (331 aa)). The tract at residues 1474–1493 (MMGSQPLLSSSRPTKGPTLL) is disordered.

As to quaternary structure, self-associates. Interacts with TGFB1I1. In terms of tissue distribution, kidney. Reduced expression in patients with focal segmental glomerulosclerosis.

The protein localises to the cytoplasm. The protein resides in the cytoskeleton. It is found in the cell membrane. It localises to the cell projection. Its subcellular location is the lamellipodium. Functionally, in the kidney glomerulus may play a role in linking podocyte foot processes to the glomerular basement membrane. May be involved in stabilization of F-actin by attenuating its depolymerization. Can recruit TGFB1I1 from focal adhesions to podocyte lamellipodia. This chain is Pleckstrin homology domain-containing family H member 2 (PLEKHH2), found in Homo sapiens (Human).